The chain runs to 361 residues: Rho-GTPase-activating protein 5 (361 aa).

In terms of domain architecture, Rho-GAP spans 52 to 245; the sequence is IFLTRRDGEK…FLINHQGSFI (194 aa). A compositionally biased stretch (low complexity) spans 306–323; that stretch reads SSATYSNSPSSNFSNMKS. Positions 306–345 are disordered; that stretch reads SSATYSNSPSSNFSNMKSSEVDPGSPPRIKSRSYSLSRSS.

The protein resides in the membrane. In terms of biological role, GTPase-activating protein for Rho1. Has a role in the negative regulation of (1-3)beta-D-glucan synthase activity and cell integrity. The chain is Rho-GTPase-activating protein 5 (rga5) from Schizosaccharomyces pombe (strain 972 / ATCC 24843) (Fission yeast).